Here is a 238-residue protein sequence, read N- to C-terminus: Probable transcriptional regulatory protein SMU_1789c (238 aa).

This sequence belongs to the TACO1 family. YeeN subfamily.

It localises to the cytoplasm. This is Probable transcriptional regulatory protein SMU_1789c from Streptococcus mutans serotype c (strain ATCC 700610 / UA159).